A 458-amino-acid polypeptide reads, in one-letter code: Vitamin K-dependent protein C (458 aa).

Residues 1–27 (IPDDVGYRNQKTASKEGVCVVSKCQDG) form the signal peptide. A propeptide spanning residues 28-36 (PNTLPRAKR) is cleaved from the precursor. The Gla domain occupies 37 to 82 (ANSFLEELRPSSLERECVEEVCDLEEAKEIFQSVDDTLAFWYKYVD). 4-carboxyglutamate occurs at positions 42, 43, 50, 52, 55, 56, 61, 62, and 65. Cysteines 53 and 58 form a disulfide. Cystine bridges form between Cys86-Cys105, Cys95-Cys100, Cys99-Cys114, and Cys116-Cys125. EGF-like domains follow at residues 91–126 (SEHP…SFCQ) and 130–170 (RFSN…LQCE). Asp107 carries the post-translational modification (3R)-3-hydroxyaspartate. An N-linked (GlcNAc...) asparagine glycan is attached at Asn133. Cystine bridges form between Cys134/Cys145, Cys141/Cys154, Cys156/Cys169, Cys177/Cys316, and Cys235/Cys251. A Peptidase S1 domain is found at 210–447 (IDGKLTRRGD…YLDWIHSHIE (238 aa)). The active-site Charge relay system is the His250. N-linked (GlcNAc...) asparagine glycosylation is present at Asn287. The active-site Charge relay system is Asp296. Asn352 is a glycosylation site (N-linked (GlcNAc...) asparagine). 2 disulfide bridges follow: Cys370-Cys384 and Cys395-Cys423. Residue Ser399 is the Charge relay system of the active site.

Belongs to the peptidase S1 family. As to quaternary structure, synthesized as a single chain precursor, which is cleaved into a light chain and a heavy chain held together by a disulfide bond. The enzyme is then activated by thrombin, which cleaves a tetradecapeptide from the amino end of the heavy chain; this reaction, which occurs at the surface of endothelial cells, is strongly promoted by thrombomodulin. The vitamin K-dependent, enzymatic carboxylation of some Glu residues allows the modified protein to bind calcium. In terms of processing, the iron and 2-oxoglutarate dependent 3-hydroxylation of aspartate and asparagine is (R) stereospecific within EGF domains. As to expression, plasma; synthesized in the liver.

Its subcellular location is the secreted. It is found in the golgi apparatus. The protein resides in the endoplasmic reticulum. The enzyme catalyses Degradation of blood coagulation factors Va and VIIIa.. In terms of biological role, protein C is a vitamin K-dependent serine protease that regulates blood coagulation by inactivating factors Va and VIIIa in the presence of calcium ions and phospholipids. Exerts a protective effect on the endothelial cell barrier function. The polypeptide is Vitamin K-dependent protein C (PROC) (Oryctolagus cuniculus (Rabbit)).